We begin with the raw amino-acid sequence, 203 residues long: IQ domain-containing protein F3 (203 aa).

The segment covering 1–12 (MELDQDKKKETP) has biased composition (basic and acidic residues). Positions 1–111 (MELDQDKKKE…CETQEADRSE (111 aa)) are disordered. The stretch at 13–82 (EETENVNEVQ…EADKAILERS (70 aa)) forms a coiled coil. Acidic residues predominate over residues 29-38 (DEETEAEAEE). The span at 39 to 51 (ADKAILERSDSVK) shows a compositional bias: basic and acidic residues. The span at 64-73 (DEETEAEAEE) shows a compositional bias: acidic residues. 2 stretches are compositionally biased toward basic and acidic residues: residues 74 to 86 (ADKAILERSDSVK) and 96 to 111 (QIQEEKCETQEADRSE). The IQ domain maps to 129-158 (VMLAGVKIQAWWRGTLVRRTLLLAALNAWT).

This is IQ domain-containing protein F3 (Iqcf3) from Mus musculus (Mouse).